The following is a 155-amino-acid chain: Large ribosomal subunit protein uL22c (155 aa).

Belongs to the universal ribosomal protein uL22 family. In terms of assembly, part of the 50S ribosomal subunit.

It is found in the plastid. The protein resides in the chloroplast. Functionally, this protein binds specifically to 23S rRNA. In terms of biological role, the globular domain of the protein is located near the polypeptide exit tunnel on the outside of the subunit, while an extended beta-hairpin is found that lines the wall of the exit tunnel in the center of the 70S ribosome. The polypeptide is Large ribosomal subunit protein uL22c (rpl22) (Nicotiana tomentosiformis (Tobacco)).